Here is a 261-residue protein sequence, read N- to C-terminus: Peroxiredoxin PRX1, mitochondrial (261 aa).

Residues 1–13 (MFSRICSAQLKRT) constitute a mitochondrion transit peptide. The Thioredoxin domain maps to 49–212 (LRINSDAPNF…VLRVIDALQL (164 aa)). Ser53 bears the Phosphoserine mark. Catalysis depends on Cys91, which acts as the Cysteine sulfenic acid (-SOH) intermediate.

Belongs to the peroxiredoxin family. Prx6 subfamily. In terms of assembly, homodimer; disulfide-linked.

Its subcellular location is the mitochondrion. The enzyme catalyses a hydroperoxide + 2 glutathione = an alcohol + glutathione disulfide + H2O. It catalyses the reaction [glutaredoxin]-dithiol + a hydroperoxide = [glutaredoxin]-disulfide + an alcohol + H2O. Its function is as follows. Thiol-specific peroxidase that catalyzes the reduction of hydrogen peroxide and organic hydroperoxides to water and alcohols, respectively. Plays a role in cell protection against oxidative stress by detoxifying peroxides and as sensor of hydrogen peroxide-mediated signaling events. Involved in mitochondrial protection of cadmium-induced oxidative stress. This is Peroxiredoxin PRX1, mitochondrial from Saccharomyces cerevisiae (strain ATCC 204508 / S288c) (Baker's yeast).